A 606-amino-acid polypeptide reads, in one-letter code: 4-hydroxy-3-methylbut-2-en-1-yl diphosphate synthase (flavodoxin) (606 aa).

[4Fe-4S] cluster-binding residues include Cys-513, Cys-516, Cys-547, and Glu-554.

The protein belongs to the IspG family. [4Fe-4S] cluster serves as cofactor.

It carries out the reaction (2E)-4-hydroxy-3-methylbut-2-enyl diphosphate + oxidized [flavodoxin] + H2O + 2 H(+) = 2-C-methyl-D-erythritol 2,4-cyclic diphosphate + reduced [flavodoxin]. It functions in the pathway isoprenoid biosynthesis; isopentenyl diphosphate biosynthesis via DXP pathway; isopentenyl diphosphate from 1-deoxy-D-xylulose 5-phosphate: step 5/6. Converts 2C-methyl-D-erythritol 2,4-cyclodiphosphate (ME-2,4cPP) into 1-hydroxy-2-methyl-2-(E)-butenyl 4-diphosphate. The sequence is that of 4-hydroxy-3-methylbut-2-en-1-yl diphosphate synthase (flavodoxin) from Chlamydia caviae (strain ATCC VR-813 / DSM 19441 / 03DC25 / GPIC) (Chlamydophila caviae).